The sequence spans 283 residues: Pantothenate synthetase 2 (283 aa).

34-41 lines the ATP pocket; sequence MGALHDGH. Catalysis depends on histidine 41, which acts as the Proton donor. Glutamine 65 serves as a coordination point for (R)-pantoate. Beta-alanine is bound at residue glutamine 65. 152–155 contributes to the ATP binding site; sequence GEKD. Glutamine 158 serves as a coordination point for (R)-pantoate. ATP contacts are provided by residues valine 181 and 189 to 192; that span reads MSSR.

The protein belongs to the pantothenate synthetase family. As to quaternary structure, homodimer.

The protein resides in the cytoplasm. The enzyme catalyses (R)-pantoate + beta-alanine + ATP = (R)-pantothenate + AMP + diphosphate + H(+). It participates in cofactor biosynthesis; (R)-pantothenate biosynthesis; (R)-pantothenate from (R)-pantoate and beta-alanine: step 1/1. Its function is as follows. Catalyzes the condensation of pantoate with beta-alanine in an ATP-dependent reaction via a pantoyl-adenylate intermediate. In Bradyrhizobium diazoefficiens (strain JCM 10833 / BCRC 13528 / IAM 13628 / NBRC 14792 / USDA 110), this protein is Pantothenate synthetase 2.